The chain runs to 362 residues: DNA polymerase IV (362 aa).

The region spanning Ile-6 to Gly-187 is the UmuC domain. Residues Asp-10 and Asp-105 each contribute to the Mg(2+) site. Glu-106 is a catalytic residue.

It belongs to the DNA polymerase type-Y family. Monomer. Mg(2+) serves as cofactor.

The protein resides in the cytoplasm. The enzyme catalyses DNA(n) + a 2'-deoxyribonucleoside 5'-triphosphate = DNA(n+1) + diphosphate. In terms of biological role, poorly processive, error-prone DNA polymerase involved in untargeted mutagenesis. Copies undamaged DNA at stalled replication forks, which arise in vivo from mismatched or misaligned primer ends. These misaligned primers can be extended by PolIV. Exhibits no 3'-5' exonuclease (proofreading) activity. May be involved in translesional synthesis, in conjunction with the beta clamp from PolIII. The chain is DNA polymerase IV from Leptospira interrogans serogroup Icterohaemorrhagiae serovar Lai (strain 56601).